The following is a 347-amino-acid chain: Farnesyl pyrophosphate synthase ERG20 (347 aa).

Isopentenyl diphosphate is bound by residues lysine 50, arginine 53, and glutamine 88. The Mg(2+) site is built by aspartate 95 and aspartate 99. Arginine 104 provides a ligand contact to dimethylallyl diphosphate. Isopentenyl diphosphate is bound at residue arginine 105. Dimethylallyl diphosphate is bound by residues lysine 192, threonine 193, glutamine 232, lysine 249, and lysine 258.

The protein belongs to the FPP/GGPP synthase family. It depends on Mg(2+) as a cofactor.

It carries out the reaction isopentenyl diphosphate + dimethylallyl diphosphate = (2E)-geranyl diphosphate + diphosphate. The catalysed reaction is isopentenyl diphosphate + (2E)-geranyl diphosphate = (2E,6E)-farnesyl diphosphate + diphosphate. It participates in isoprenoid biosynthesis; farnesyl diphosphate biosynthesis; farnesyl diphosphate from geranyl diphosphate and isopentenyl diphosphate: step 1/1. The protein operates within isoprenoid biosynthesis; geranyl diphosphate biosynthesis; geranyl diphosphate from dimethylallyl diphosphate and isopentenyl diphosphate: step 1/1. Its function is as follows. Farnesyl pyrophosphate synthase; part of the second module of ergosterol biosynthesis pathway that includes the middle steps of the pathway. ERG20 catalyzes the sequential condensation of isopentenyl pyrophosphate with dimethylallyl pyrophosphate, and then with the resultant geranylpyrophosphate to the ultimate product farnesyl pyrophosphate. The second module is carried out in the vacuole and involves the formation of farnesyl diphosphate, which is also an important intermediate in the biosynthesis of ubiquinone, dolichol, heme and prenylated proteins. Activity by the mevalonate kinase ERG12 (FG05912) first converts mevalonate into 5-phosphomevalonate. 5-phosphomevalonate is then further converted to 5-diphosphomevalonate by the phosphomevalonate kinase ERG8 (FG09764). The diphosphomevalonate decarboxylase ERG19 (FG10424) then produces isopentenyl diphosphate. The isopentenyl-diphosphate delta-isomerase IDI1 (FG09722) then catalyzes the 1,3-allylic rearrangement of the homoallylic substrate isopentenyl (IPP) to its highly electrophilic allylic isomer, dimethylallyl diphosphate (DMAPP). Finally the farnesyl diphosphate synthase ERG20 (FG06784) catalyzes the sequential condensation of isopentenyl pyrophosphate with dimethylallyl pyrophosphate, and then with the resultant geranylpyrophosphate to the ultimate product farnesyl pyrophosphate. In Gibberella zeae (strain ATCC MYA-4620 / CBS 123657 / FGSC 9075 / NRRL 31084 / PH-1) (Wheat head blight fungus), this protein is Farnesyl pyrophosphate synthase ERG20.